The following is a 415-amino-acid chain: Serine hydroxymethyltransferase (415 aa).

Residues L117 and 121–123 (GHL) each bind (6S)-5,6,7,8-tetrahydrofolate. K226 bears the N6-(pyridoxal phosphate)lysine mark. (6S)-5,6,7,8-tetrahydrofolate contacts are provided by residues E241 and 349–351 (SPF).

This sequence belongs to the SHMT family. Homodimer. Requires pyridoxal 5'-phosphate as cofactor.

It localises to the cytoplasm. The catalysed reaction is (6R)-5,10-methylene-5,6,7,8-tetrahydrofolate + glycine + H2O = (6S)-5,6,7,8-tetrahydrofolate + L-serine. It functions in the pathway one-carbon metabolism; tetrahydrofolate interconversion. Its pathway is amino-acid biosynthesis; glycine biosynthesis; glycine from L-serine: step 1/1. Its function is as follows. Catalyzes the reversible interconversion of serine and glycine with tetrahydrofolate (THF) serving as the one-carbon carrier. This reaction serves as the major source of one-carbon groups required for the biosynthesis of purines, thymidylate, methionine, and other important biomolecules. Also exhibits THF-independent aldolase activity toward beta-hydroxyamino acids, producing glycine and aldehydes, via a retro-aldol mechanism. The sequence is that of Serine hydroxymethyltransferase from Geobacter sulfurreducens (strain ATCC 51573 / DSM 12127 / PCA).